The following is a 273-amino-acid chain: Putative carboxymethylenebutenolidase (273 aa).

Active-site residues include cysteine 130, aspartate 191, and histidine 223.

This sequence belongs to the dienelactone hydrolase family.

It catalyses the reaction 2-(5-oxo-2,5-dihydrofuran-2-ylidene)acetate + H2O = 4-oxohex-2-enedioate + H(+). This is Putative carboxymethylenebutenolidase from Saccharomyces cerevisiae (strain ATCC 204508 / S288c) (Baker's yeast).